We begin with the raw amino-acid sequence, 322 residues long: Lignin-forming anionic peroxidase (322 aa).

Residues 1–27 form the signal peptide; that stretch reads MNTPTQSFRAKAAIFSLLLLSCMQCHA. Gln-28 is modified (pyrrolidone carboxylic acid). Disulfide bonds link Cys-38–Cys-118, Cys-71–Cys-76, Cys-124–Cys-318, and Cys-203–Cys-229. The Proton acceptor role is filled by His-69. Asp-70, Val-73, Gly-75, Asp-77, and Ser-79 together coordinate Ca(2+). Residue Pro-166 coordinates substrate. Residue His-196 coordinates heme b. Position 197 (Thr-197) interacts with Ca(2+). Asn-213 is a glycosylation site (N-linked (GlcNAc...) asparagine). Ca(2+) contacts are provided by Asp-242, Thr-245, and Asp-250.

It belongs to the peroxidase family. Classical plant (class III) peroxidase subfamily. Requires Ca(2+) as cofactor. It depends on heme b as a cofactor. As to expression, mesophyll protoplasts and to a much lesser extent, roots and germinating seeds.

The protein resides in the secreted. The catalysed reaction is 2 a phenolic donor + H2O2 = 2 a phenolic radical donor + 2 H2O. In terms of biological role, removal of H(2)O(2), oxidation of toxic reductants, biosynthesis and degradation of lignin, suberization, auxin catabolism, response to environmental stresses such as wounding, pathogen attack and oxidative stress. These functions might be dependent on each isozyme/isoform in each plant tissue. Plays an integral role in secondary cell wall biosynthesis by the polymerization of cinnamyl alcohols into lignin and by forming rigid cross-links between cellulose, pectin, hydroxy-proline-rich glycoproteins, and lignin. The sequence is that of Lignin-forming anionic peroxidase from Nicotiana sylvestris (Wood tobacco).